We begin with the raw amino-acid sequence, 211 residues long: LexA repressor (211 aa).

Positions 28–48 (VREVGEAVGLSSSSTIHGHIE) form a DNA-binding region, H-T-H motif. Active-site for autocatalytic cleavage activity residues include Ser-132 and Lys-170.

It belongs to the peptidase S24 family. In terms of assembly, homodimer.

The enzyme catalyses Hydrolysis of Ala-|-Gly bond in repressor LexA.. Its function is as follows. Represses a number of genes involved in the response to DNA damage (SOS response), including recA and lexA. In the presence of single-stranded DNA, RecA interacts with LexA causing an autocatalytic cleavage which disrupts the DNA-binding part of LexA, leading to derepression of the SOS regulon and eventually DNA repair. In Leuconostoc citreum (strain KM20), this protein is LexA repressor.